The primary structure comprises 480 residues: UDP-N-acetylmuramate--L-alanine ligase (480 aa).

127–133 provides a ligand contact to ATP; sequence GTHGKTT.

The protein belongs to the MurCDEF family.

It localises to the cytoplasm. It carries out the reaction UDP-N-acetyl-alpha-D-muramate + L-alanine + ATP = UDP-N-acetyl-alpha-D-muramoyl-L-alanine + ADP + phosphate + H(+). Its pathway is cell wall biogenesis; peptidoglycan biosynthesis. Functionally, cell wall formation. The protein is UDP-N-acetylmuramate--L-alanine ligase of Blochmanniella floridana.